The chain runs to 1166 residues: IQ domain-containing protein N (1166 aa).

Positions 1–19 (MQPATQLQFTNHLSPNGQC) are enriched in polar residues. Positions 1–56 (MQPATQLQFTNHLSPNGQCILQPPPTPSLPDKMEKAPPQPQHEGLKSEEHLPQQPA) are disordered. Residues 89–118 (HARAATLIQANWRGYRLRQKLISQMTAAKA) enclose the IQ 1 domain. Disordered regions lie at residues 431 to 450 (VCPG…VATP), 769 to 797 (LSAP…TTQG), and 829 to 848 (DSGA…PCQE). 5 consecutive IQ domains span residues 907 to 932 (AVTT…RRAT), 928 to 955 (HRRA…RATT), 952 to 979 (RATT…MLHP), 1091 to 1119 (RDKA…MAAK), and 1114 to 1143 (QQMA…LLGP). Positions 1145–1166 (DPWSSSQHMHWASSQHTHWPGI) are disordered. Over residues 1147–1166 (WSSSQHMHWASSQHTHWPGI) the composition is skewed to polar residues.

Interacts with calmodulin.

Functionally, essential for spermiogenesis and fertilization. May be required for manchette assembly in elongating spermatids. The chain is IQ domain-containing protein N (IQCN) from Macaca fascicularis (Crab-eating macaque).